Reading from the N-terminus, the 158-residue chain is NAD(P)H-quinone oxidoreductase subunit J, chloroplastic (158 aa).

Belongs to the complex I 30 kDa subunit family. As to quaternary structure, NDH is composed of at least 16 different subunits, 5 of which are encoded in the nucleus.

The protein resides in the plastid. It is found in the chloroplast thylakoid membrane. It carries out the reaction a plastoquinone + NADH + (n+1) H(+)(in) = a plastoquinol + NAD(+) + n H(+)(out). It catalyses the reaction a plastoquinone + NADPH + (n+1) H(+)(in) = a plastoquinol + NADP(+) + n H(+)(out). In terms of biological role, NDH shuttles electrons from NAD(P)H:plastoquinone, via FMN and iron-sulfur (Fe-S) centers, to quinones in the photosynthetic chain and possibly in a chloroplast respiratory chain. The immediate electron acceptor for the enzyme in this species is believed to be plastoquinone. Couples the redox reaction to proton translocation, and thus conserves the redox energy in a proton gradient. This chain is NAD(P)H-quinone oxidoreductase subunit J, chloroplastic, found in Solanum lycopersicum (Tomato).